The chain runs to 424 residues: Probable methyltransferase EP424R (424 aa).

Residues 103–315 (QIVTNAWLKM…TYIVGKNRLR (213 aa)) form the Adrift-type SAM-dependent 2'-O-MTase domain. Positions 135 and 228 each coordinate S-adenosyl-L-methionine. Lysine 268 (proton acceptor) is an active-site residue.

It is found in the virion. This is Probable methyltransferase EP424R from Ornithodoros (relapsing fever ticks).